A 374-amino-acid polypeptide reads, in one-letter code: tRNA-specific 2-thiouridylase MnmA (374 aa).

ATP-binding positions include 12-19 (GMSGGVDS) and Met38. Residues 98 to 100 (NPD) form an interaction with target base in tRNA region. Cys103 (nucleophile) is an active-site residue. Cys103 and Cys207 are oxidised to a cystine. ATP is bound at residue Gly128. An interaction with tRNA region spans residues 157-159 (KDQ). Residue Cys207 is the Cysteine persulfide intermediate of the active site. The interaction with tRNA stretch occupies residues 321-322 (RY).

Belongs to the MnmA/TRMU family.

The protein localises to the cytoplasm. The catalysed reaction is S-sulfanyl-L-cysteinyl-[protein] + uridine(34) in tRNA + AH2 + ATP = 2-thiouridine(34) in tRNA + L-cysteinyl-[protein] + A + AMP + diphosphate + H(+). In terms of biological role, catalyzes the 2-thiolation of uridine at the wobble position (U34) of tRNA, leading to the formation of s(2)U34. In Aliivibrio fischeri (strain MJ11) (Vibrio fischeri), this protein is tRNA-specific 2-thiouridylase MnmA.